Here is a 208-residue protein sequence, read N- to C-terminus: MGRKRSASSSRWLNEHFKDPFVQKAHKQKLRSRAYFKLDEIQQTDRLFKPGMTVVDLGAAPGGWSQYAVTQIGSKGRIIACDILEMDPIVGVDFLQGDFRDENVLAALLERVGESKVDVVMSDMAPNFSGMPSVDIPRAMYLVELALDMCKQVLTANGSFVVKVFQGEGFDEYLREIRSLFKVVKVRKPEASRGRSREVYIVAIGYKY.

S-adenosyl-L-methionine contacts are provided by G62, W64, D82, D98, and D123. Catalysis depends on K163, which acts as the Proton acceptor.

Belongs to the class I-like SAM-binding methyltransferase superfamily. RNA methyltransferase RlmE family.

It is found in the cytoplasm. The enzyme catalyses uridine(2552) in 23S rRNA + S-adenosyl-L-methionine = 2'-O-methyluridine(2552) in 23S rRNA + S-adenosyl-L-homocysteine + H(+). Functionally, specifically methylates the uridine in position 2552 of 23S rRNA at the 2'-O position of the ribose in the fully assembled 50S ribosomal subunit. This Actinobacillus succinogenes (strain ATCC 55618 / DSM 22257 / CCUG 43843 / 130Z) protein is Ribosomal RNA large subunit methyltransferase E.